The primary structure comprises 54 residues: Photosystem II reaction center protein L (54 aa).

Residues Ser-33–Phe-53 traverse the membrane as a helical segment.

This sequence belongs to the PsbL family. In terms of assembly, PSII is composed of 1 copy each of membrane proteins PsbA, PsbB, PsbC, PsbD, PsbE, PsbF, PsbH, PsbI, PsbJ, PsbK, PsbL, PsbM, PsbT, PsbX, PsbY, PsbZ, Psb30/Ycf12, at least 3 peripheral proteins of the oxygen-evolving complex and a large number of cofactors. It forms dimeric complexes.

The protein resides in the plastid. The protein localises to the chloroplast thylakoid membrane. One of the components of the core complex of photosystem II (PSII). PSII is a light-driven water:plastoquinone oxidoreductase that uses light energy to abstract electrons from H(2)O, generating O(2) and a proton gradient subsequently used for ATP formation. It consists of a core antenna complex that captures photons, and an electron transfer chain that converts photonic excitation into a charge separation. This subunit is found at the monomer-monomer interface and is required for correct PSII assembly and/or dimerization. The sequence is that of Photosystem II reaction center protein L from Stigeoclonium helveticum (Green alga).